The sequence spans 244 residues: Ureidoacrylate amidohydrolase RutB (244 aa).

The Proton acceptor role is filled by Asp38. Lys147 is a catalytic residue. The active-site Nucleophile is the Cys180.

This sequence belongs to the isochorismatase family. RutB subfamily.

It catalyses the reaction (Z)-3-ureidoacrylate + H2O + H(+) = (Z)-3-aminoacrylate + NH4(+) + CO2. The enzyme catalyses (Z)-3-ureidoacrylate + H2O = (Z)-3-aminoacrylate + carbamate + H(+). It carries out the reaction (Z)-2-methylureidoacrylate + H2O + H(+) = (Z)-2-methylaminoacrylate + NH4(+) + CO2. Functionally, hydrolyzes ureidoacrylate to form aminoacrylate and carbamate. The carbamate hydrolyzes spontaneously, thereby releasing one of the nitrogen atoms of the pyrimidine ring as ammonia and one of its carbon atoms as CO2. This Shigella sonnei (strain Ss046) protein is Ureidoacrylate amidohydrolase RutB.